We begin with the raw amino-acid sequence, 1003 residues long: NACHT, LRR and PYD domains-containing protein 9B (1003 aa).

In terms of domain architecture, Pyrin spans Met-1 to His-91. One can recognise an NACHT domain in the interval Val-143–Ile-465. Gly-149–Thr-156 serves as a coordination point for ATP. LRR repeat units follow at residues Lys-749–Glu-770, Val-778–Glu-799, His-806–Cys-826, Thr-835–Ala-856, Asn-863–Cys-883, Asn-892–Leu-913, and Thr-920–Cys-940.

As to quaternary structure, sensor component of NLRP9 inflammasomes. Inflammasomes are supramolecular complexes that assemble in the cytosol in response to pathogens, such as rotavirus, but not encephalomyocarditis virus (EMCV), and play critical roles in innate immunity and inflammation. The core of NLRP9 inflammasomes consists of a signal sensor component (NLRP9), an adapter (ASC/PYCARD), which recruits an effector pro-inflammatory caspase (CASP1). Within the complex, NLRP9 and PYCARD interact via their respective DAPIN/pyrin domains. This interaction initiates speck formation (nucleation) which greatly enhances further addition of soluble PYCARD molecules to the speck in a prion-like polymerization process. Clustered PYCARD nucleates the formation of CASP1 filaments through the interaction of their respective CARD domains, acting as a platform for CASP1 polymerization. CASP1 filament formation increases local enzyme concentration, resulting in trans-autocleavage and activation. Active CASP1 then processes IL1B and IL18 precursors, leading to the release of mature cytokines in the extracellular milieu and inflammatory response. Interacts with DHX9 upon rotavirus infection; this interaction may trigger inflammasome activation and inflammatory response. In terms of tissue distribution, predominantly expressed in the intestine, including proximal and distal colon, cecum, ileum, jejunum and duodenum (at protein level). In the ileum, expressed in epithelial cells. Also expressed in oocytes at all follicular stages and in preimplantation embryos (at protein level). Although expression decreases in preimplantation embryos, it is still detectable in blastocyts.

The protein localises to the cytoplasm. It is found in the inflammasome. Its function is as follows. As the sensor component of the NLRP9 inflammasome, plays a crucial role in innate immunity and inflammation. In response to pathogens, including rotavirus, initiates the formation of the inflammasome polymeric complex, made of NLRP9, PYCARD and CASP1. Recruitment of proCASP1 to the inflammasome promotes its activation and CASP1-catalyzed IL1B and IL18 maturation and release in the extracellular milieu. The active cytokines stimulate inflammatory responses. Inflammasomes can also induce pyroptosis, an inflammatory form of programmed cell death. NLRP9 inflammasome activation may be initiated by DHX9 interaction with viral double-stranded RNA (dsRNA), preferentially to short dsRNA segments. The sequence is that of NACHT, LRR and PYD domains-containing protein 9B (Nlrp9b) from Mus musculus (Mouse).